The sequence spans 178 residues: NAD(P)H-quinone oxidoreductase subunit J (178 aa).

The protein belongs to the complex I 30 kDa subunit family. NDH-1 can be composed of about 15 different subunits; different subcomplexes with different compositions have been identified which probably have different functions.

Its subcellular location is the cellular thylakoid membrane. The enzyme catalyses a plastoquinone + NADH + (n+1) H(+)(in) = a plastoquinol + NAD(+) + n H(+)(out). The catalysed reaction is a plastoquinone + NADPH + (n+1) H(+)(in) = a plastoquinol + NADP(+) + n H(+)(out). Its function is as follows. NDH-1 shuttles electrons from an unknown electron donor, via FMN and iron-sulfur (Fe-S) centers, to quinones in the respiratory and/or the photosynthetic chain. The immediate electron acceptor for the enzyme in this species is believed to be plastoquinone. Couples the redox reaction to proton translocation, and thus conserves the redox energy in a proton gradient. Cyanobacterial NDH-1 also plays a role in inorganic carbon-concentration. This is NAD(P)H-quinone oxidoreductase subunit J from Crocosphaera subtropica (strain ATCC 51142 / BH68) (Cyanothece sp. (strain ATCC 51142)).